The primary structure comprises 305 residues: MSKIPVIVIVGPTAVGKTSLSIELAKRLDGEIISGDSMQVYRGLDIGTAKITPEEMGGIKHYLIDVTDPSVPFTAAKFQSETRKAIETIHQAGKLPIIVGGTGLYIQSVFYDYDFGNASEDKAYRAKLEQLDKVILWQMLEQQDPESARQIHENNKRRVIRALEVMHLTGKPFSEYQVHNVLNDTYKPLFLGLDLDRELLYERINQRVNLMFEQGLITEAKKLYEQHLVDVPAVRGIGYKELFPYFERKSSLEEAKELIQKNSRHFAKRQLTWFRNRMDIDWIQAGVSSTESEALNKATTFLTAK.

Residue 11-18 participates in ATP binding; the sequence is GPTAVGKT. 13-18 provides a ligand contact to substrate; the sequence is TAVGKT. The tract at residues 36-39 is interaction with substrate tRNA; the sequence is DSMQ.

This sequence belongs to the IPP transferase family. Monomer. Mg(2+) serves as cofactor.

The enzyme catalyses adenosine(37) in tRNA + dimethylallyl diphosphate = N(6)-dimethylallyladenosine(37) in tRNA + diphosphate. Its function is as follows. Catalyzes the transfer of a dimethylallyl group onto the adenine at position 37 in tRNAs that read codons beginning with uridine, leading to the formation of N6-(dimethylallyl)adenosine (i(6)A). This chain is tRNA dimethylallyltransferase, found in Listeria monocytogenes serotype 4a (strain HCC23).